Consider the following 870-residue polypeptide: Valine--tRNA ligase (870 aa).

Positions 42–52 match the 'HIGH' region motif; it reads PNVTGVLHIGH. The 'KMSKS' region motif lies at 527–531; the sequence is KMSKS. Position 530 (K530) interacts with ATP. The stretch at 800 to 870 forms a coiled coil; that stretch reads LENVDLSGIL…ISVELQNLRG (71 aa).

This sequence belongs to the class-I aminoacyl-tRNA synthetase family. ValS type 1 subfamily. Monomer.

Its subcellular location is the cytoplasm. It catalyses the reaction tRNA(Val) + L-valine + ATP = L-valyl-tRNA(Val) + AMP + diphosphate. Catalyzes the attachment of valine to tRNA(Val). As ValRS can inadvertently accommodate and process structurally similar amino acids such as threonine, to avoid such errors, it has a 'posttransfer' editing activity that hydrolyzes mischarged Thr-tRNA(Val) in a tRNA-dependent manner. This Campylobacter jejuni subsp. jejuni serotype O:2 (strain ATCC 700819 / NCTC 11168) protein is Valine--tRNA ligase.